A 255-amino-acid polypeptide reads, in one-letter code: tRNA (guanine-N(1)-)-methyltransferase (255 aa).

S-adenosyl-L-methionine-binding positions include Gly117 and 137–142 (LGDFVL).

This sequence belongs to the RNA methyltransferase TrmD family. In terms of assembly, homodimer.

It is found in the cytoplasm. It catalyses the reaction guanosine(37) in tRNA + S-adenosyl-L-methionine = N(1)-methylguanosine(37) in tRNA + S-adenosyl-L-homocysteine + H(+). Specifically methylates guanosine-37 in various tRNAs. The polypeptide is tRNA (guanine-N(1)-)-methyltransferase (Paraburkholderia phymatum (strain DSM 17167 / CIP 108236 / LMG 21445 / STM815) (Burkholderia phymatum)).